The primary structure comprises 132 residues: Dinoflagellate viral nucleoprotein 5 (132 aa).

Basic residues predominate over residues 1–44; that stretch reads MAAMKKAMKVKKSAKKSAKKSGKKGGMKKKAKRVSKVARGKRAK. Residues 1–84 form a disordered region; it reads MAAMKKAMKV…KKQSEHGKKI (84 aa). The span at 57-66 shows a compositional bias: polar residues; the sequence is GGLTKNSLVK.

Phosphorylated.

The protein resides in the nucleus. The protein localises to the chromosome. Functionally, DNA-binding protein, which similarly to histones, may compact DNA into chromatin. The chain is Dinoflagellate viral nucleoprotein 5 from Hematodinium sp.